An 81-amino-acid chain; its full sequence is Small cysteine-rich protein 1 2 (81 aa).

Positions 1-19 (MGVNFNICLLLLLVATISS) are cleaved as a signal peptide. Positions 20 to 39 (QPLKATEKDDSTDENPFGIY) are excised as a propeptide.

This sequence belongs to the Cnidaria small cysteine-rich protein (SCRiP) family. alpha subfamily. Post-translationally, the basic myotoxic domain of rattlesnake crotamine toxins (with 6 Cys residues) has been detected in this protein. However, this protein contains 2 additional Cys at the C-terminal region. Hence, this protein may contain 4 disulfide bonds instead of the 3 suggested by the myotoxin domain.

It is found in the secreted. The protein localises to the nematocyst. Its function is as follows. Induces neurotoxic symptoms on zebrafish. Has also been claimed to be implied in calcification, but tests on homolog proteins suggest that proteins of this family have a neurotoxic function and not a calcification function. The sequence is that of Small cysteine-rich protein 1 2 from Montipora capitata (Rice coral).